The primary structure comprises 320 residues: MPSISVRRLFDDNQYKLQLAWAAGNSGADNRIGVEADKPVLALVGHLNFIHPNQIQVVGLAESEYLNRLESGETGYQFGDLFDISMSLVIVANGLPVSPGLRDYCHKNDIPLLTSKLESPYLMDVLRIYLQRTLAASSVKHGVFLDVFEIGVLITGHSGLGKSELALELISRGHSLIADDAVELFRIGPETLEGRCSPMLRDFLEVRGLGILNIRHIFGETSIRPKKILQLIINLVEADDEYMKQLDRLSIRTETESILNVNVRSVTLPVAVGRNLAVLVEAAVRNYILQLRGKDSTREFLERHQTQLKENEQHNENRPD.

Catalysis depends on residues histidine 141 and lysine 162. 156–163 (GHSGLGKS) contributes to the ATP binding site. A Mg(2+)-binding site is contributed by serine 163. Catalysis depends on aspartate 180, which acts as the Proton acceptor; for phosphorylation activity. Proton donor; for dephosphorylation activity. An important for the catalytic mechanism of both phosphorylation and dephosphorylation region spans residues 204–213 (LEVRGLGILN). Residue glutamate 205 coordinates Mg(2+). Arginine 248 is an active-site residue. The tract at residues 269 to 274 (PVAVGR) is important for the catalytic mechanism of dephosphorylation.

It belongs to the HPrK/P family. As to quaternary structure, homohexamer. Mg(2+) serves as cofactor.

It catalyses the reaction [HPr protein]-L-serine + ATP = [HPr protein]-O-phospho-L-serine + ADP + H(+). It carries out the reaction [HPr protein]-O-phospho-L-serine + phosphate + H(+) = [HPr protein]-L-serine + diphosphate. Its function is as follows. Catalyzes the ATP- as well as the pyrophosphate-dependent phosphorylation of a specific serine residue in HPr, a phosphocarrier protein of the phosphoenolpyruvate-dependent sugar phosphotransferase system (PTS). HprK/P also catalyzes the pyrophosphate-producing, inorganic phosphate-dependent dephosphorylation (phosphorolysis) of seryl-phosphorylated HPr (P-Ser-HPr). This Neisseria meningitidis serogroup A / serotype 4A (strain DSM 15465 / Z2491) protein is HPr kinase/phosphorylase.